Here is a 227-residue protein sequence, read N- to C-terminus: N-(5'-phosphoribosyl)anthranilate isomerase (227 aa).

Belongs to the TrpF family.

The catalysed reaction is N-(5-phospho-beta-D-ribosyl)anthranilate = 1-(2-carboxyphenylamino)-1-deoxy-D-ribulose 5-phosphate. It functions in the pathway amino-acid biosynthesis; L-tryptophan biosynthesis; L-tryptophan from chorismate: step 3/5. This Herminiimonas arsenicoxydans protein is N-(5'-phosphoribosyl)anthranilate isomerase.